The primary structure comprises 344 residues: Tetraacyldisaccharide 4'-kinase (344 aa).

68–75 is a binding site for ATP; the sequence is TAGGNGKT.

Belongs to the LpxK family.

The enzyme catalyses a lipid A disaccharide + ATP = a lipid IVA + ADP + H(+). It functions in the pathway glycolipid biosynthesis; lipid IV(A) biosynthesis; lipid IV(A) from (3R)-3-hydroxytetradecanoyl-[acyl-carrier-protein] and UDP-N-acetyl-alpha-D-glucosamine: step 6/6. Its function is as follows. Transfers the gamma-phosphate of ATP to the 4'-position of a tetraacyldisaccharide 1-phosphate intermediate (termed DS-1-P) to form tetraacyldisaccharide 1,4'-bis-phosphate (lipid IVA). The chain is Tetraacyldisaccharide 4'-kinase from Photobacterium profundum (strain SS9).